Here is a 307-residue protein sequence, read N- to C-terminus: Ribosomal protein uL3 glutamine methyltransferase (307 aa).

Belongs to the protein N5-glutamine methyltransferase family. PrmB subfamily.

The catalysed reaction is L-glutaminyl-[ribosomal protein uL3] + S-adenosyl-L-methionine = N(5)-methyl-L-glutaminyl-[ribosomal protein uL3] + S-adenosyl-L-homocysteine + H(+). Methylates large ribosomal subunit protein uL3 on a specific glutamine residue. This Burkholderia pseudomallei (strain K96243) protein is Ribosomal protein uL3 glutamine methyltransferase.